An 857-amino-acid polypeptide reads, in one-letter code: Linoleate 9S-lipoxygenase 6 (857 aa).

One can recognise a PLAT domain in the interval 26–156 (NALDFTDLAG…RYKSDRIFFA (131 aa)). Residues 159–857 (PYLPSETPEL…GKGIPNSVSI (699 aa)) enclose the Lipoxygenase domain. A disordered region spans residues 205 to 243 (NPDQGEQNVRTTLGGSADYPYPRRGRTGRPPTRTDPKSE). The segment covering 208 to 218 (QGEQNVRTTLG) has biased composition (polar residues). Positions 518, 523, 709, 713, and 857 each coordinate Fe cation.

It belongs to the lipoxygenase family. As to quaternary structure, monomer. Fe cation is required as a cofactor. In terms of tissue distribution, expressed in tubers and roots. Detected in leaves, petioles and stems.

It localises to the cytoplasm. It carries out the reaction (9Z,12Z)-octadecadienoate + O2 = (9S)-hydroperoxy-(10E,12Z)-octadecadienoate. It functions in the pathway lipid metabolism; oxylipin biosynthesis. In terms of biological role, plant lipoxygenases may be involved in a number of diverse aspects of plant physiology including growth and development, pest resistance, and senescence or responses to wounding. Catalyzes the hydroperoxidation of lipids containing a cis,cis-1,4-pentadiene structure. Linoleic and linolenic acids are the preferred substrates, but is also active with arachidonic acid. The products are almost exclusively the S enantiomers. This is Linoleate 9S-lipoxygenase 6 (LOX1.6) from Solanum tuberosum (Potato).